We begin with the raw amino-acid sequence, 313 residues long: Ribosomal RNA small subunit methyltransferase H (313 aa).

S-adenosyl-L-methionine contacts are provided by residues 35–37 (GGH), Asp-55, Phe-81, Asp-103, and Gln-110.

Belongs to the methyltransferase superfamily. RsmH family.

Its subcellular location is the cytoplasm. It carries out the reaction cytidine(1402) in 16S rRNA + S-adenosyl-L-methionine = N(4)-methylcytidine(1402) in 16S rRNA + S-adenosyl-L-homocysteine + H(+). In terms of biological role, specifically methylates the N4 position of cytidine in position 1402 (C1402) of 16S rRNA. The chain is Ribosomal RNA small subunit methyltransferase H from Pseudomonas paraeruginosa (strain DSM 24068 / PA7) (Pseudomonas aeruginosa (strain PA7)).